The sequence spans 256 residues: Phosphatidylglycerol--prolipoprotein diacylglyceryl transferase (256 aa).

3 helical membrane passes run 19–39 (VHWYGLMYLIGFIGAWLLGYW), 56–76 (LIFYSALGVILGGRVGYMLFY), and 91–111 (IWEGGMSFHGGLLGVVIAAWL). Position 139 (Arg139) interacts with a 1,2-diacyl-sn-glycero-3-phospho-(1'-sn-glycerol). Residues 231–251 (FGWLTMGQVLSIPMLLIGIWL) traverse the membrane as a helical segment.

Belongs to the Lgt family.

It localises to the cell inner membrane. The enzyme catalyses L-cysteinyl-[prolipoprotein] + a 1,2-diacyl-sn-glycero-3-phospho-(1'-sn-glycerol) = an S-1,2-diacyl-sn-glyceryl-L-cysteinyl-[prolipoprotein] + sn-glycerol 1-phosphate + H(+). It functions in the pathway protein modification; lipoprotein biosynthesis (diacylglyceryl transfer). Functionally, catalyzes the transfer of the diacylglyceryl group from phosphatidylglycerol to the sulfhydryl group of the N-terminal cysteine of a prolipoprotein, the first step in the formation of mature lipoproteins. This Legionella pneumophila (strain Paris) protein is Phosphatidylglycerol--prolipoprotein diacylglyceryl transferase.